Consider the following 177-residue polypeptide: UPF0177 protein YxdF (177 aa).

Helical transmembrane passes span 2-22 (TLVL…KNTL), 30-50 (IFWL…VTVL), 117-137 (ALVH…SFII), and 152-172 (IVHS…DTFF).

It belongs to the UPF0177 family.

It is found in the cell membrane. In Lactococcus lactis subsp. lactis (strain IL1403) (Streptococcus lactis), this protein is UPF0177 protein YxdF (yxdF).